We begin with the raw amino-acid sequence, 715 residues long: Polyribonucleotide nucleotidyltransferase (715 aa).

The Mg(2+) site is built by D493 and D499. Positions 560–619 constitute a KH domain; that stretch reads PRMITIKINPEKIRDVIGKGGSVIRALTEETGTTIDISDDGVVTIASTSSEGMAEAKKRI. The 69-residue stretch at 629 to 697 folds into the S1 motif domain; it reads GQVYEGTVLK…EKGRVRLSAK (69 aa).

Belongs to the polyribonucleotide nucleotidyltransferase family. It depends on Mg(2+) as a cofactor.

It localises to the cytoplasm. It catalyses the reaction RNA(n+1) + phosphate = RNA(n) + a ribonucleoside 5'-diphosphate. Its function is as follows. Involved in mRNA degradation. Catalyzes the phosphorolysis of single-stranded polyribonucleotides processively in the 3'- to 5'-direction. The sequence is that of Polyribonucleotide nucleotidyltransferase from Burkholderia vietnamiensis (strain G4 / LMG 22486) (Burkholderia cepacia (strain R1808)).